The primary structure comprises 634 residues: 1-deoxy-D-xylulose-5-phosphate synthase (634 aa).

Residues H74 and 115–117 (AHS) each bind thiamine diphosphate. Position 146 (D146) interacts with Mg(2+). Residues 147–148 (GA), N176, Y283, and E365 contribute to the thiamine diphosphate site. N176 contributes to the Mg(2+) binding site.

This sequence belongs to the transketolase family. DXPS subfamily. As to quaternary structure, homodimer. Requires Mg(2+) as cofactor. It depends on thiamine diphosphate as a cofactor.

The enzyme catalyses D-glyceraldehyde 3-phosphate + pyruvate + H(+) = 1-deoxy-D-xylulose 5-phosphate + CO2. It functions in the pathway metabolic intermediate biosynthesis; 1-deoxy-D-xylulose 5-phosphate biosynthesis; 1-deoxy-D-xylulose 5-phosphate from D-glyceraldehyde 3-phosphate and pyruvate: step 1/1. Catalyzes the acyloin condensation reaction between C atoms 2 and 3 of pyruvate and glyceraldehyde 3-phosphate to yield 1-deoxy-D-xylulose-5-phosphate (DXP). This is 1-deoxy-D-xylulose-5-phosphate synthase from Burkholderia pseudomallei (strain 668).